A 169-amino-acid chain; its full sequence is Cell division inhibitor SulA (169 aa).

The segment at 106–112 (ALRTGNY) is ftsZ binding. The lon protease binding stretch occupies residues 162–169 (KIHSNLYH).

The protein belongs to the SulA family. As to quaternary structure, interacts with FtsZ. In terms of processing, is rapidly cleaved and degraded by the Lon protease once DNA damage is repaired.

Its function is as follows. Component of the SOS system and an inhibitor of cell division. Accumulation of SulA causes rapid cessation of cell division and the appearance of long, non-septate filaments. In the presence of GTP, binds a polymerization-competent form of FtsZ in a 1:1 ratio, thus inhibiting FtsZ polymerization and therefore preventing it from participating in the assembly of the Z ring. This mechanism prevents the premature segregation of damaged DNA to daughter cells during cell division. This chain is Cell division inhibitor SulA, found in Escherichia coli O45:K1 (strain S88 / ExPEC).